Reading from the N-terminus, the 167-residue chain is MDLFLTGTILKPKGLKGEVKVLPVTDFPELFLSRKSYLAGKSDASVMPLNVLKASLSKGFAWLFFEGVDTLEKAEKLSGMHLFVEEKELARQPTGRAYLHELIGMKVLDGNRYEAGVISDILKMPAHEVYEVQANGRKILIPAVEEFVEEIDMAGRYMVVPRFDEFL.

The PRC barrel domain maps to 94–166; sequence TGRAYLHELI…YMVVPRFDEF (73 aa).

The protein belongs to the RimM family. In terms of assembly, binds ribosomal protein uS19.

Its subcellular location is the cytoplasm. Its function is as follows. An accessory protein needed during the final step in the assembly of 30S ribosomal subunit, possibly for assembly of the head region. Essential for efficient processing of 16S rRNA. May be needed both before and after RbfA during the maturation of 16S rRNA. It has affinity for free ribosomal 30S subunits but not for 70S ribosomes. This is Ribosome maturation factor RimM from Chlorobium phaeobacteroides (strain DSM 266 / SMG 266 / 2430).